A 103-amino-acid chain; its full sequence is uncharacterized protein (103 aa).

Polar residues-rich tracts occupy residues 1–10 (MSNSCSTSSY) and 18–28 (TRSGSNVNRNY). Residues 1–28 (MSNSCSTSSYPIRRKTPTRSGSNVNRNY) form a disordered region.

This is an uncharacterized protein from Acanthamoeba polyphaga mimivirus (APMV).